The chain runs to 219 residues: AA11 family lytic polysaccharide monooxygenase A (219 aa).

An N-terminal signal peptide occupies residues 1–18; that stretch reads MMLSKVVMGLLTASLAAA. Position 19 (H19) interacts with Cu(+). 3 cysteine pairs are disulfide-bonded: C58-C154, C94-C116, and C185-C218. N-linked (GlcNAc...) asparagine glycosylation is present at N80. H89 contacts Cu(+).

The protein belongs to the polysaccharide monooxygenase AA11 family. The cofactor is Cu(2+).

Functionally, lytic polysaccharide monooxygenase (LPMO) that depolymerizes chitin via the oxidation of scissile beta-(1-4)-glycosidic bonds, yielding C1 or C4 oxidation products. Catalysis by LPMOs requires the reduction of the active-site copper from Cu(II) to Cu(I) by a reducing agent and H(2)O(2) or O(2) as a cosubstrate. Has considerable affinity for alpha-chitin and, more so, beta-chitin. Active toward both alpha-chitin and beta-chitin allomorphs and enhances chitin degradation by an endoacting chitinase, in particular for alpha-chitin, and so plays a role in fungal chitin turnover. The catalytic activity increases when supplying reactions with hydrogen peroxide, confirming that it has peroxygenase activity. Does not show activity on phosphoric acid-swollen cellulose (PASC), Avicel, tamarind xyloglucan, birchwood xylan, beechwood xylan, acetyl glucuronoxylan from aspen, ivory nut mannan, acetylated konjac glucomannan, potato starch, heparin, hyaluronic acid, and chitosan. The polypeptide is AA11 family lytic polysaccharide monooxygenase A (Aspergillus fumigatus (strain CBS 144.89 / FGSC A1163 / CEA10) (Neosartorya fumigata)).